A 345-amino-acid polypeptide reads, in one-letter code: Molybdopterin synthase catalytic subunit (345 aa).

Substrate contacts are provided by residues 101–102 (HR), Lys-117, and 124–126 (KKE).

The protein belongs to the MoaE family. MOCS2B subfamily. Heterotetramer; composed of 2 small (Mocs2A) and 2 large (Mocs2B) subunits.

It localises to the cytoplasm. The catalysed reaction is 2 [molybdopterin-synthase sulfur-carrier protein]-C-terminal-Gly-aminoethanethioate + cyclic pyranopterin phosphate + H2O = molybdopterin + 2 [molybdopterin-synthase sulfur-carrier protein]-C-terminal Gly-Gly + 2 H(+). Its pathway is cofactor biosynthesis; molybdopterin biosynthesis. Catalytic subunit of the molybdopterin synthase complex, a complex that catalyzes the conversion of precursor Z into molybdopterin. Acts by mediating the incorporation of 2 sulfur atoms from thiocarboxylated Mocs2A into precursor Z to generate a dithiolene group. This is Molybdopterin synthase catalytic subunit from Drosophila virilis (Fruit fly).